Consider the following 206-residue polypeptide: Large ribosomal subunit protein uL4 (206 aa).

The interval 63 to 97 is disordered; the sequence is MYKQKGTGRARHHSARAPQFRGGGKAHGPVVRSHE. The segment covering 64–77 has biased composition (basic residues); it reads YKQKGTGRARHHSA.

Belongs to the universal ribosomal protein uL4 family. In terms of assembly, part of the 50S ribosomal subunit.

In terms of biological role, one of the primary rRNA binding proteins, this protein initially binds near the 5'-end of the 23S rRNA. It is important during the early stages of 50S assembly. It makes multiple contacts with different domains of the 23S rRNA in the assembled 50S subunit and ribosome. Its function is as follows. Forms part of the polypeptide exit tunnel. This Rhizobium leguminosarum bv. trifolii (strain WSM2304) protein is Large ribosomal subunit protein uL4.